We begin with the raw amino-acid sequence, 371 residues long: 4-hydroxy-3-methylbut-2-en-1-yl diphosphate synthase (flavodoxin) (371 aa).

The [4Fe-4S] cluster site is built by C272, C275, C307, and E314.

Belongs to the IspG family. The cofactor is [4Fe-4S] cluster.

It catalyses the reaction (2E)-4-hydroxy-3-methylbut-2-enyl diphosphate + oxidized [flavodoxin] + H2O + 2 H(+) = 2-C-methyl-D-erythritol 2,4-cyclic diphosphate + reduced [flavodoxin]. The protein operates within isoprenoid biosynthesis; isopentenyl diphosphate biosynthesis via DXP pathway; isopentenyl diphosphate from 1-deoxy-D-xylulose 5-phosphate: step 5/6. Functionally, converts 2C-methyl-D-erythritol 2,4-cyclodiphosphate (ME-2,4cPP) into 1-hydroxy-2-methyl-2-(E)-butenyl 4-diphosphate. This Magnetococcus marinus (strain ATCC BAA-1437 / JCM 17883 / MC-1) protein is 4-hydroxy-3-methylbut-2-en-1-yl diphosphate synthase (flavodoxin).